A 181-amino-acid chain; its full sequence is GATA zinc finger domain-containing protein 22 (181 aa).

The GATA-type zinc-finger motif lies at 118–145 (CQICLTNNTPYWRWSVIENNKIRVCNRC).

The polypeptide is GATA zinc finger domain-containing protein 22 (gtaV) (Dictyostelium discoideum (Social amoeba)).